We begin with the raw amino-acid sequence, 188 residues long: dCTP deaminase (188 aa).

Residues 111-116 (KSTYAR), 135-137 (TLE), Gln-156, Tyr-170, and Gln-180 each bind dCTP. Glu-137 functions as the Proton donor/acceptor in the catalytic mechanism.

This sequence belongs to the dCTP deaminase family. Homotrimer.

It carries out the reaction dCTP + H2O + H(+) = dUTP + NH4(+). It participates in pyrimidine metabolism; dUMP biosynthesis; dUMP from dCTP (dUTP route): step 1/2. In terms of biological role, catalyzes the deamination of dCTP to dUTP. This Cupriavidus pinatubonensis (strain JMP 134 / LMG 1197) (Cupriavidus necator (strain JMP 134)) protein is dCTP deaminase.